The sequence spans 83 residues: MVVIRLARGGAKNRPFYNIVVTDSRNRRDGRFIERVGFYNPVANEKQERVRFTMDRLNYWVGVGAQLSDSVAKLLKEQKVVAA.

The protein belongs to the bacterial ribosomal protein bS16 family.

The sequence is that of Small ribosomal subunit protein bS16 from Chromobacterium violaceum (strain ATCC 12472 / DSM 30191 / JCM 1249 / CCUG 213 / NBRC 12614 / NCIMB 9131 / NCTC 9757 / MK).